Here is a 275-residue protein sequence, read N- to C-terminus: MGQKINPTGFRLAVTKNWTSRWYANNTDFAKMLKEDVDVRIYLKKKLKNASVSKVVIERPAKNARITIYSSRPGVVIGKKGEDIEVLRRELQKRMGVPVHVNIEEIRKPEVDAQLIADSITQQLEKRIMFRRAMKRAMQNAMRLGAQGIKIMSSGRLNGAEIARREWYREGRVPLHTLKADIDYATSEAETTYGIIGVKVWVYKGDTLGRGAEAQAAATSAEPAAEEKKTRRAPSKTAARKPAAGTDKPLVAAKPAVKRVRKVETPAADTQKSGE.

A KH type-2 domain is found at Val39–Arg107. Residues Ala216–Glu275 are disordered.

This sequence belongs to the universal ribosomal protein uS3 family. Part of the 30S ribosomal subunit. Forms a tight complex with proteins S10 and S14.

Its function is as follows. Binds the lower part of the 30S subunit head. Binds mRNA in the 70S ribosome, positioning it for translation. This chain is Small ribosomal subunit protein uS3, found in Polynucleobacter asymbioticus (strain DSM 18221 / CIP 109841 / QLW-P1DMWA-1) (Polynucleobacter necessarius subsp. asymbioticus).